A 658-amino-acid polypeptide reads, in one-letter code: Squalene--hopene cyclase (658 aa).

The stretch at 69–110 (EAKIGRYLRRIQGEHGGWSLFYGGDLDLSATVKAYFALKMIG) is one PFTB 1 repeat. Asp392 acts as the Proton donor in catalysis. PFTB repeat units lie at residues 418-459 (KARA…GALL), 486-526 (MKAA…NVAA), and 534-584 (IQKA…GLMA).

The protein belongs to the terpene cyclase/mutase family.

Its subcellular location is the cell membrane. The catalysed reaction is squalene = hop-22(29)-ene. It catalyses the reaction squalene + H2O = hopan-22-ol. The protein operates within secondary metabolite biosynthesis; hopanoid biosynthesis. Catalyzes the cyclization of squalene into hopene. The sequence is that of Squalene--hopene cyclase (shc) from Zymomonas mobilis subsp. mobilis (strain ATCC 31821 / ZM4 / CP4).